The sequence spans 84 residues: CDC42 small effector protein 2 (84 aa).

S-palmitoyl cysteine attachment occurs at residues Cys-10 and Cys-11. Positions 29-42 constitute a CRIB domain; sequence IGEPTNFVHTAHVG. Phosphoserine is present on residues Ser-43 and Ser-52.

The protein belongs to the CDC42SE/SPEC family. In terms of assembly, interacts with CDC42 (in GTP-bound form). Interacts weakly with RAC1 and not at all with RHOA.

It localises to the cytoplasm. Its subcellular location is the cytoskeleton. It is found in the cell membrane. The protein resides in the cell projection. The protein localises to the phagocytic cup. In terms of biological role, probably involved in the organization of the actin cytoskeleton by acting downstream of CDC42, inducing actin filament assembly. Alters CDC42-induced cell shape changes. In activated T-cells, may play a role in CDC42-mediated F-actin accumulation at the immunological synapse. May play a role in early contractile events in phagocytosis in macrophages. The chain is CDC42 small effector protein 2 (CDC42SE2) from Bos taurus (Bovine).